Here is a 465-residue protein sequence, read N- to C-terminus: 3-isopropylmalate dehydratase large subunit (465 aa).

[4Fe-4S] cluster is bound by residues Cys347, Cys407, and Cys410.

Belongs to the aconitase/IPM isomerase family. LeuC type 1 subfamily. In terms of assembly, heterodimer of LeuC and LeuD. [4Fe-4S] cluster serves as cofactor.

It carries out the reaction (2R,3S)-3-isopropylmalate = (2S)-2-isopropylmalate. Its pathway is amino-acid biosynthesis; L-leucine biosynthesis; L-leucine from 3-methyl-2-oxobutanoate: step 2/4. Functionally, catalyzes the isomerization between 2-isopropylmalate and 3-isopropylmalate, via the formation of 2-isopropylmaleate. This chain is 3-isopropylmalate dehydratase large subunit, found in Aeromonas hydrophila subsp. hydrophila (strain ATCC 7966 / DSM 30187 / BCRC 13018 / CCUG 14551 / JCM 1027 / KCTC 2358 / NCIMB 9240 / NCTC 8049).